The primary structure comprises 390 residues: GDSL esterase/lipase At1g28640 (390 aa).

Residues methionine 1 to serine 26 form the signal peptide. Serine 42 functions as the Nucleophile in the catalytic mechanism. Asparagine 105, asparagine 138, and asparagine 321 each carry an N-linked (GlcNAc...) asparagine glycan. Active-site residues include aspartate 346 and histidine 349. N-linked (GlcNAc...) asparagine glycosylation occurs at asparagine 364.

The protein belongs to the 'GDSL' lipolytic enzyme family.

Its subcellular location is the secreted. This is GDSL esterase/lipase At1g28640 from Arabidopsis thaliana (Mouse-ear cress).